Here is a 511-residue protein sequence, read N- to C-terminus: MSGHNILTQLESIDVLDLPYVERDLNFAQLVSLSFLLYGDEHSTATYILQKLLVLARATASDWPHSDILSQYAKSKPQTWRKYLVEALCIIGARQVLRKLGLCWQELRMHYLPHVGSIRVHIHPLLKSLYTICEELTLAQRGRMVLDIKEKNSVGDPLRFYDAEYLEIFLLDWLTRRLIRLGDFNANGSDVQLLIEYFKFNDLHAQATLLVDTVNAYATSSCSPATPNVLLPMDGNGIANESSSPTAAASRPRAKNALQLSRENAGIALIINQQEFYRDANDDYKVYLPPIELPLRNGTDMDKQRLTNVFSMLGYKVEAHDNLDHLSMLHHIRQACKRSLLHESLVVCILSHGFEDAVYGANSVALRISDIENVLCSYENLYEKPKLVVIQACQQEDKENNALPYKINASTKSPCQYLNMLRAMSTVPGFPALRHTQTGSWFIQSLCDAIVEHSNSDHIADILTIVINNVANKRGNKNETMVPWTGGALRQHVYFPRTSATDKVVPDSPGL.

Positions 1–242 (MSGHNILTQL…MDGNGIANES (242 aa)) are excised as a propeptide. Active-site residues include His-352 and Cys-393. A propeptide spanning residues 406-415 (KINASTKSPC) is cleaved from the precursor.

It belongs to the peptidase C14A family. Heterotetramer that consists of two anti-parallel arranged heterodimers, each one formed by a 15 kDa (caspase-8 subunit p15) and a 10 kDa (caspase-8 subunit p10) subunit. Interacts with the N-terminus of Fadd.

It is found in the cytoplasm. It catalyses the reaction Strict requirement for Asp at position P1 and has a preferred cleavage sequence of (Leu/Asp/Val)-Glu-Thr-Asp-|-(Gly/Ser/Ala).. Functionally, effector of the programmed cell death (PCD) activators rpr, grim and W. May play an apoptotic role in the germline as well as soma. Role in immune response, required to resist Gram-negative bacterial infections by regulating DptA. Fadd interacts with Dredd, Fadd promotes cleavage of Dredd and is necessary and sufficient for enhancing Dredd-induced apoptosis. The polypeptide is Caspase-8 (Drosophila pseudoobscura pseudoobscura (Fruit fly)).